Reading from the N-terminus, the 107-residue chain is uncharacterized protein (107 aa).

The chain crosses the membrane as a helical span at residues isoleucine 12 to glycine 32.

It is found in the membrane. This is an uncharacterized protein from Rickettsia prowazekii (strain Madrid E).